Here is a 649-residue protein sequence, read N- to C-terminus: Lipoteichoic acid synthase 2 (649 aa).

The Cytoplasmic portion of the chain corresponds to 1–9 (MKTFIKERG). Residues 10-30 (LAFFLIAVVLLWIKTYVGYVL) traverse the membrane as a helical segment. Residues 31 to 42 (NFNLGIDNTIQK) lie on the Extracellular side of the membrane. The helical transmembrane segment at 43–63 (ILLFVNPLSSSLFFLGFGLLF) threads the bilayer. Residues 64–69 (KKKLQQ) lie on the Cytoplasmic side of the membrane. The chain crosses the membrane as a helical span at residues 70–90 (TAIIVIHFLMSFLLYANIVYY). The Extracellular segment spans residues 91–118 (RFFNDFITIPVIMQAKTNGGQLGDSAFS). A helical transmembrane segment spans residues 119-139 (LMRPTDAFYFIDTIILIILAI). Residues 140 to 151 (KVNKPAETSSKK) lie on the Cytoplasmic side of the membrane. The chain crosses the membrane as a helical span at residues 152–172 (SFRIIFASSILVFLINLAVAE). Residues 173 to 649 (SDRPELLTRS…SETSKDNEDK (477 aa)) are Extracellular-facing. 2 residues coordinate Mn(2+): Glu-253 and Thr-297. Residue Thr-297 is part of the active site. Residue His-412 participates in substrate binding. 2 residues coordinate Mn(2+): Asp-471 and His-472. The disordered stretch occupies residues 622–649 (FKKVNPSDYDYTKHDEDSSETSKDNEDK). Residues 631-649 (DYTKHDEDSSETSKDNEDK) show a composition bias toward basic and acidic residues.

The protein belongs to the LTA synthase family. In terms of processing, proteolytically cleaved.

It is found in the cell membrane. The protein localises to the secreted. Its pathway is cell wall biogenesis; lipoteichoic acid biosynthesis. Its function is as follows. Catalyzes the polymerization of lipoteichoic acid (LTA) polyglycerol phosphate, a reaction that presumably uses phosphatidylglycerol (PG) as substrate. This chain is Lipoteichoic acid synthase 2 (ltaS2), found in Bacillus subtilis (strain 168).